A 657-amino-acid polypeptide reads, in one-letter code: Glycogen debranching enzyme (657 aa).

The active-site Nucleophile is the Asp-336. Glu-371 serves as the catalytic Proton donor. Residues 460–479 are disordered; that stretch reads ANGEENRDGTNNNYSNNHGK.

It belongs to the glycosyl hydrolase 13 family.

The catalysed reaction is Hydrolysis of (1-&gt;6)-alpha-D-glucosidic linkages to branches with degrees of polymerization of three or four glucose residues in limit dextrin.. The protein operates within glycan degradation; glycogen degradation. Functionally, removes maltotriose and maltotetraose chains that are attached by 1,6-alpha-linkage to the limit dextrin main chain, generating a debranched limit dextrin. The sequence is that of Glycogen debranching enzyme from Shigella dysenteriae serotype 1 (strain Sd197).